The primary structure comprises 256 residues: uncharacterized protein (256 aa).

2 disordered regions span residues 1–171 and 185–256; these read MARG…QLKH and NGQR…LYND. The stretch at 14–39 forms a coiled coil; the sequence is KRRSKVQEEEEHVEGSEEEVEEPEQK. Acidic residues-rich tracts occupy residues 21-35 and 64-92; these read EEEE…EVEE and SDDD…DNDE. Basic and acidic residues predominate over residues 108-129; that stretch reads NRGDHESHDDNSDNEEQGDRGN. Over residues 192–205 the composition is skewed to gly residues; the sequence is KRGGPPRGSFGQRG. The span at 219–234 shows a compositional bias: basic and acidic residues; that stretch reads RQGDTRDTRDTRDTRL.

This is an uncharacterized protein from Acanthamoeba polyphaga (Amoeba).